The chain runs to 584 residues: A-type ATP synthase subunit A 2 (584 aa).

Residue 227-234 (GGFGTGKT) participates in ATP binding.

Belongs to the ATPase alpha/beta chains family. As to quaternary structure, has multiple subunits with at least A(3), B(3), C, D, E, F, H, I and proteolipid K(x).

The protein resides in the cell membrane. It catalyses the reaction ATP + H2O + 4 H(+)(in) = ADP + phosphate + 5 H(+)(out). Its function is as follows. Component of the A-type ATP synthase that produces ATP from ADP in the presence of a proton gradient across the membrane. The A chain is the catalytic subunit. This is A-type ATP synthase subunit A 2 from Methanospirillum hungatei JF-1 (strain ATCC 27890 / DSM 864 / NBRC 100397 / JF-1).